We begin with the raw amino-acid sequence, 278 residues long: MESFGARLHRVVGERGPLCVGIDPHPGLLERWGLDDDVRGLERFAGTVVEALGDRVAVVKPQSAFFERFGSRGVAVLESTIRQLRTAGSLVLLDVKRGDIGSTVAAYASAYLDPSSPLHVDAVTVSPYLGVGALAPMFELAAAQGGGVFVLALTSNPEGAAVQRARTADGRTVAQLVIDEISQLNAGARPLGSVGLVVGATIGQTGHELAAVNGPLLAPGLGAQGASAADLRVVFGSSLPAVLPTYSREVLAAGPDVVALRGAADRVLADCRAALTGS.

The active-site Proton donor is the Lys96.

Belongs to the OMP decarboxylase family. Type 2 subfamily.

It catalyses the reaction orotidine 5'-phosphate + H(+) = UMP + CO2. It functions in the pathway pyrimidine metabolism; UMP biosynthesis via de novo pathway; UMP from orotate: step 2/2. This chain is Orotidine 5'-phosphate decarboxylase, found in Salinispora tropica (strain ATCC BAA-916 / DSM 44818 / JCM 13857 / NBRC 105044 / CNB-440).